Reading from the N-terminus, the 149-residue chain is Calmodulin-1 (149 aa).

Position 2 is an N-acetylalanine (Ala-2). 4 consecutive EF-hand domains span residues 8–43 (DQIS…LGQN), 44–79 (PTEA…KMKD), 81–116 (DSEE…LGEK), and 117–149 (LTDE…MMAK). Asp-21, Asp-23, Asp-25, Cys-27, Glu-32, Asp-57, Asp-59, Asn-61, Thr-63, Glu-68, Asp-94, Asp-96, Asn-98, and Glu-105 together coordinate Ca(2+). Position 116 is an N6,N6,N6-trimethyllysine (Lys-116). The Ca(2+) site is built by Asp-130, Asp-132, Asp-134, Gln-136, and Glu-141.

This sequence belongs to the calmodulin family.

Its function is as follows. Calmodulin mediates the control of a large number of enzymes, ion channels and other proteins by Ca(2+). Among the enzymes to be stimulated by the calmodulin-Ca(2+) complex are a number of protein kinases and phosphatases. This Petunia hybrida (Petunia) protein is Calmodulin-1 (CAM81).